The sequence spans 348 residues: Phenylalanine--tRNA ligase alpha subunit (348 aa).

Residue E268 participates in Mg(2+) binding.

This sequence belongs to the class-II aminoacyl-tRNA synthetase family. Phe-tRNA synthetase alpha subunit type 1 subfamily. As to quaternary structure, tetramer of two alpha and two beta subunits. It depends on Mg(2+) as a cofactor.

It is found in the cytoplasm. It carries out the reaction tRNA(Phe) + L-phenylalanine + ATP = L-phenylalanyl-tRNA(Phe) + AMP + diphosphate + H(+). The protein is Phenylalanine--tRNA ligase alpha subunit of Bordetella parapertussis (strain 12822 / ATCC BAA-587 / NCTC 13253).